The following is a 250-amino-acid chain: MAPRWKWKGAEAKALAEPISKSVSELQLSLAETESSGTLSSCNVLLAVEPEQAELLDRCCFGRLVLSAEKIKKWIQLSFEEAFFLHYNLKCIKISLQGRCLENEVDTWLYMKSKRPNFPMFFKAYSHLRSKNWVLRSGLQYGVDFVAYRHHPSLVHSEYSVLVQSGDSDRLRVWSDIHCAVRLSGSVAKTLLTLYVNGNFKGEDVNLLVCLENFTVEEQTISRWSPELSREDQSTNSKQHVPNVSNLNTL.

Residues Tyr148, His156, and Lys189 contribute to the active site. The interval Ser225–Leu250 is disordered. Positions Ser234–Leu250 are enriched in polar residues.

Belongs to the tRNA-intron endonuclease family. In terms of assembly, tRNA splicing endonuclease is a heterotetramer composed of SEN2, SEN15, SEN34/LENG5 and SEN54.

Its subcellular location is the nucleus. It catalyses the reaction pretRNA = a 3'-half-tRNA molecule with a 5'-OH end + a 5'-half-tRNA molecule with a 2',3'-cyclic phosphate end + an intron with a 2',3'-cyclic phosphate and a 5'-hydroxyl terminus.. Constitutes one of the two catalytic subunit of the tRNA-splicing endonuclease complex, a complex responsible for identification and cleavage of the splice sites in pre-tRNA. It cleaves pre-tRNA at the 5'- and 3'-splice sites to release the intron. The products are an intron and two tRNA half-molecules bearing 2',3'-cyclic phosphate and 5'-OH termini. There are no conserved sequences at the splice sites, but the intron is invariably located at the same site in the gene, placing the splice sites an invariant distance from the constant structural features of the tRNA body. Probably carries the active site for 5'-splice site cleavage. The chain is tRNA-splicing endonuclease subunit Sen2-2 (SEN2) from Arabidopsis thaliana (Mouse-ear cress).